Consider the following 488-residue polypeptide: Sucrose phosphorylase (488 aa).

Sucrose contacts are provided by residues Asp50, His88, Arg191–Asp193, Glu233, His290–Asp291, Asp341–Gln344, and Arg398. The Nucleophile role is filled by Asp193. Catalysis depends on Glu233, which acts as the Proton donor.

The protein belongs to the glycosyl hydrolase 13 family. Sucrose phosphorylase subfamily.

The enzyme catalyses sucrose + phosphate = D-fructose + alpha-D-glucose 1-phosphate. The protein is Sucrose phosphorylase of Agrobacterium vitis (Rhizobium vitis).